The primary structure comprises 91 residues: PqqA binding protein (91 aa).

The protein belongs to the PqqD family. Monomer. Interacts with PqqE.

Its pathway is cofactor biosynthesis; pyrroloquinoline quinone biosynthesis. In terms of biological role, functions as a PqqA binding protein and presents PqqA to PqqE, in the pyrroloquinoline quinone (PQQ) biosynthetic pathway. In Pseudomonas putida (strain W619), this protein is PqqA binding protein.